The chain runs to 167 residues: Translationally-controlled tumor protein homolog (167 aa).

The TCTP domain maps to 1 to 167; the sequence is MLIYQDVLTG…WKDGLKEIKI (167 aa).

It belongs to the TCTP family.

It is found in the cytoplasm. It localises to the cytoskeleton. Its function is as follows. Involved in protein synthesis. Involved in microtubule stabilization. The sequence is that of Translationally-controlled tumor protein homolog from Cryptococcus neoformans var. neoformans serotype D (strain B-3501A) (Filobasidiella neoformans).